Consider the following 254-residue polypeptide: Type II methyl-directed restriction enzyme DpnI (254 aa).

This sequence belongs to the DpnI type II restriction endonuclease family.

It carries out the reaction Endonucleolytic cleavage of DNA to give specific double-stranded fragments with terminal 5'-phosphates.. Functionally, an M and P subtype restriction enzyme that recognizes the double-stranded, methylated sequence 5'-G(Me)ATC-3' and cleaves after A-2. The chain is Type II methyl-directed restriction enzyme DpnI from Streptococcus pneumoniae serotype 4 (strain ATCC BAA-334 / TIGR4).